The chain runs to 154 residues: Zinc finger HIT domain-containing protein 1 (154 aa).

The tract at residues 1 to 73 is disordered; sequence MVEKKPAVRS…TGKKKKKTRG (73 aa). Positions 14 to 23 are enriched in basic and acidic residues; the sequence is GQRRVLDRAA. Residues 23 to 39 are a coiled coil; sequence ARQRRINRQLEALENDN. Positions 38–47 match the Nuclear localization signal motif; sequence DNFQDDPHAG. Residues 72–110 are interaction with NR1D2; it reads RGDHFKLRFRKNFQALLEEQNLSASEGPNYLTACAGPPS. T103 carries the post-translational modification Phosphothreonine; by MAPK11 and MAPK14. 8 residues coordinate Zn(2+): C117, C120, C128, C131, C136, C140, H144, and C149. The HIT-type zinc-finger motif lies at 117-149; that stretch reads CAVCGFPSPYTCVSCGARYCTVRCLGTHQETRC.

The protein belongs to the ZNHIT1 family. As to quaternary structure, component of the chromatin-remodeling SRCAP complex composed of at least SRCAP, DMAP1, RUVBL1, RUVBL2, ACTL6A, YEATS4, ACTR6 and ZNHIT1. Interacts with MAPK11 and MAPK14. Interacts with NR1D1 and NR2D2. Interacts (via HIT-type zinc finger) with the RUVBL1/RUVBL2 complex in the presence of ADP. Interacts with histone deacetylase HDAC1. Interacts with histone H2AZ1; the interaction results in recruitment of H2AZ1 to the MYOG promoter region. Interacts with PCID2; the interaction results in inhibition of SRCAP complex activity, preventing the deposition of histone variant H2AZ1 to lymphoid fate regulator genes and restricting lymphoid lineage commitment. In terms of processing, phosphorylated on Thr by MAPK11 or MAPK14. Phosphorylation is required for MYOG induction, for deposition of histone H2AZ1 at the MYOG promoter and for SRCAP complex integrity. As to expression, higher expression in testis than in other tissues (at protein level). Expressed in the lens (at protein level). In the intestinal epithelium, expression is enriched at the bottom of crypts. In hematopoietic cells, enriched in hematopoietic stem cells and progenitors with significantly reduced expression in differentiated cells such as granulocytes, monocytes, T cells and B cells.

The protein resides in the nucleus. In terms of biological role, plays a role in chromatin remodeling by promoting the incorporation of histone variant H2AZ1/H2A.Z into the genome to regulate gene expression. Promotes SRCAP complex-mediated deposition of histone variant H2AZ1 to lymphoid fate regulator genes, enhancing lymphoid lineage commitment. Recruited to the promoter of the transcriptional activator MYOG at the early stages of muscle differentiation where it mediates binding of histone variant H2AZ1 to chromatin and induces muscle-specific gene expression. Maintains hematopoietic stem cell (HSC) quiescence by determining the chromatin accessibility at distal enhancers of HSC quiescence genes such as PTEN, FSTL1 and KLF4, enhancing deposition of H2AZ1 to promote their sustained transcription and restricting PI3K-AKT signaling inhibition. Plays a role in intestinal stem cell maintenance by promoting H2AZ1 deposition at the transcription start sites of genes involved in intestinal stem cell fate determination including LGR5, TGFB1 and TGFBR2, thereby contributing to gene transcription. Promotes phosphorylation of the H2AZ1 chaperone VPS72/YL1 which enhances the interaction between HZAZ1 and VPS72. Regulates the entry of male germ cells into meiosis by controlling histone H2AZ1 deposition which facilitates the expression of meiotic genes such as MEIOSIN, leading to the initiation of meiosis. Required for postnatal heart function through its role in maintenance of cardiac Ca(2+) homeostasis by modulating the expression of Ca(2+)-regulating proteins CASQ1 and ATP2A2/SERCA2A via deposition of histone H2AZ1 at their promoters. During embryonic heart development, required for mitochondrial maturation and oxidative metabolism by functioning through H2AZ1 deposition to activate transcription of metabolic genes and is also required to maintain the stability of the respiratory complex. In neural cells, increases deposition of the H2AZ1 histone variant and promotes neurite growth. Plays a role in TP53/p53-mediated apoptosis induction by stimulating the transcriptional activation of several proapoptotic p53 target genes such as PMAIP1/NOXA and BBC3/PUMA. Mediates cell cycle arrest induced in response to gamma-irradiation by enhancing recruitment of TP53/p53 to the promoter of the cell cycle inhibitor CDKN1A, leading to its transcriptional activation. Recruited to the promoter of cyclin-dependent kinase CDK6 and inhibits its transcription, possibly by decreasing the acetylation level of histone H4, leading to cell cycle arrest at the G1 phase. Plays a role in lens fiber cell differentiation by regulating the expression of cell cycle regulator CDKN1A/p21Cip1. Binds to transcriptional repressor NR1D2 and relieves it of its inhibitory effect on the transcription of apolipoprotein APOC3 without affecting its DNA-binding activity. The protein is Zinc finger HIT domain-containing protein 1 (Znhit1) of Mus musculus (Mouse).